Here is a 595-residue protein sequence, read N- to C-terminus: Isoprene synthase, chloroplastic (595 aa).

Residues 1–37 (MATELLCLHRPISLTHKLFRNPLPKVIQATPLTLKLR) constitute a chloroplast transit peptide. Asp-345 contributes to the dimethylallyl diphosphate binding site. Positions 345 and 349 each coordinate Mg(2+). The DDXXD motif signature appears at 345–349 (DDIYD). Positions 423, 486, and 489 each coordinate dimethylallyl diphosphate. Mg(2+) is bound by residues Asn-489, Ser-493, and Glu-497.

The protein belongs to the terpene synthase family. Tpsb subfamily. Mg(2+) serves as cofactor. It depends on Mn(2+) as a cofactor.

Its subcellular location is the plastid. The protein localises to the chloroplast. It catalyses the reaction dimethylallyl diphosphate = isoprene + diphosphate. Functionally, lyase that catalyzes the formation of isoprene from dimethylallyl diphosphate. The polypeptide is Isoprene synthase, chloroplastic (ISPS) (Populus tremuloides (Quaking aspen)).